Reading from the N-terminus, the 429-residue chain is Serum response factor-binding protein 1 (429 aa).

N-acetylalanine is present on alanine 2. Coiled-coil stretches lie at residues 42 to 67 (KGTE…AMKE) and 108 to 146 (LLKK…NHSE). 2 disordered regions span residues 131–157 (AEVE…NGSN) and 176–429 (LAKK…TFDD). Positions 146-157 (ENTLYSNDNGSN) are enriched in polar residues. Residues 183 to 195 (NSKEKIAKMEHGP) show a composition bias toward basic and acidic residues. Lysine 190 participates in a covalent cross-link: Glycyl lysine isopeptide (Lys-Gly) (interchain with G-Cter in SUMO2). Phosphoserine occurs at positions 203, 205, 264, 279, and 281. Residues 249 to 265 (GGEEFCEEEKEYFDDST) are compositionally biased toward acidic residues. The segment covering 296–341 (KESSCHSSVKEQKPLEKVFLKEDTGETHGDTRNDKIKPSTETRKLE) has biased composition (basic and acidic residues). Residue lysine 316 forms a Glycyl lysine isopeptide (Lys-Gly) (interchain with G-Cter in SUMO2) linkage. Phosphoserine occurs at positions 349, 351, and 367. Basic and acidic residues predominate over residues 357-367 (NFKEQAPKTRS). Over residues 373-383 (NEPQIKNQFNK) the composition is skewed to polar residues.

As to quaternary structure, interacts with SRF. Forms complexes with SRF and SRF cofactors ARID2, MYOCD and NKX2-5. Interacts with the N-terminus of SLC2A4. In terms of tissue distribution, abundantly expressed in heart and skeletal muscle, and at much lower levels in brain and lung.

It localises to the cytoplasm. The protein localises to the perinuclear region. May be involved in regulating transcriptional activation of cardiac genes during the aging process. May play a role in biosynthesis and/or processing of SLC2A4 in adipose cells. This Homo sapiens (Human) protein is Serum response factor-binding protein 1.